The following is a 643-amino-acid chain: RNA-binding protein RO60 (643 aa).

Residues 63 to 473 enclose the TROVE domain; it reads VENNAGGFVF…AFVNAPPTGK (411 aa). An RNA-binding region spans residues 186-390; sequence RTPTHLFEFV…SMPMTAMIRN (205 aa). The tract at residues 465 to 643 is VWFA-like domain; that stretch reads FVNAPPTGKR…IVHEFVTGKI (179 aa). A divalent metal cation contacts are provided by Ser482, Ser484, and Thr549.

This sequence belongs to the Ro 60 kDa family.

It localises to the cytoplasm. In terms of biological role, RNA-binding protein that binds to misfolded non-coding RNAs, pre-5S rRNA, and several small cytoplasmic RNA molecules known as Y RNAs. This is RNA-binding protein RO60 from Caenorhabditis elegans.